Reading from the N-terminus, the 72-residue chain is Bowman-Birk type proteinase inhibitor (72 aa).

7 disulfide bridges follow: cysteine 8–cysteine 61, cysteine 9–cysteine 24, cysteine 12–cysteine 57, cysteine 14–cysteine 22, cysteine 31–cysteine 38, cysteine 35–cysteine 50, and cysteine 40–cysteine 48.

This sequence belongs to the Bowman-Birk serine protease inhibitor family.

This inhibitor has two domains, each with separate antiprotease activity. 1 mole of inhibitor inhibits either 1 mole of trypsin or 2 moles of chymotrypsin, stoichiometrically. The protein is Bowman-Birk type proteinase inhibitor of Vicia sativa subsp. nigra (Common vetch).